A 180-amino-acid polypeptide reads, in one-letter code: Nucleoside-triphosphatase THEP1 (180 aa).

ATP contacts are provided by residues 9-16 and 99-106; these read GRPGIGKT and VVIVDEVG.

It belongs to the THEP1 NTPase family.

The enzyme catalyses a ribonucleoside 5'-triphosphate + H2O = a ribonucleoside 5'-diphosphate + phosphate + H(+). Its function is as follows. Has nucleotide phosphatase activity towards ATP, GTP, CTP, TTP and UTP. May hydrolyze nucleoside diphosphates with lower efficiency. The protein is Nucleoside-triphosphatase THEP1 of Methanopyrus kandleri (strain AV19 / DSM 6324 / JCM 9639 / NBRC 100938).